We begin with the raw amino-acid sequence, 80 residues long: Acyl carrier protein (80 aa).

Positions 1–76 (MTLEEKIIEI…DVIDYLKVRN (76 aa)) constitute a Carrier domain. Serine 36 carries the post-translational modification O-(pantetheine 4'-phosphoryl)serine.

The protein belongs to the acyl carrier protein (ACP) family. Post-translationally, 4'-phosphopantetheine is transferred from CoA to a specific serine of apo-ACP by AcpS. This modification is essential for activity because fatty acids are bound in thioester linkage to the sulfhydryl of the prosthetic group.

The protein localises to the cytoplasm. It functions in the pathway lipid metabolism; fatty acid biosynthesis. Its function is as follows. Carrier of the growing fatty acid chain in fatty acid biosynthesis. The polypeptide is Acyl carrier protein (Syntrophus aciditrophicus (strain SB)).